Here is a 337-residue protein sequence, read N- to C-terminus: Serpentine receptor class beta-6 (337 aa).

Transmembrane regions (helical) follow at residues 20-40 (QFYT…LIIF), 62-82 (ILIS…IPFL), 98-118 (IFQN…LGIT), 138-158 (IGVF…YFFF), 183-203 (WLCY…YFLV), 234-254 (TFIS…TLII), and 273-293 (GVYI…CVIL).

Belongs to the nematode receptor-like protein srb family. Expressed in the ADL, ADF and ASH chemosensory neurons in the head and in the PHA and PHB chemosensory neurons in the tail. Low expression also observed in the egg-laying structures in the mid-body region.

It localises to the cell membrane. Its function is as follows. Mediates recognition and avoidance of Streptomyces species by detecting dodecanoic acid secreted by the bacteria. Also mediates avoidance of decanoic acid which is not secreted by Streptomyces species but this may represent an additional important avoidance response in the environment. This Caenorhabditis elegans protein is Serpentine receptor class beta-6 (srb-6).